A 322-amino-acid polypeptide reads, in one-letter code: CMP-sialic acid transporter 1 (322 aa).

Over 1-2 the chain is Cytoplasmic; that stretch reads MQ. A helical membrane pass occupies residues 3–23; it reads WYLVAALLTVLTSSQGILTTL. The Lumenal segment spans residues 24 to 33; sequence SQSNGKYKYD. A helical membrane pass occupies residues 34-54; it reads YATIPFLAELFKLSFSSFFLW. Topologically, residues 55–75 are cytoplasmic; it reads KECQSSSPPRMTKEWRSIRLY. Residues 76–96 traverse the membrane as a helical segment; that stretch reads LVPSVIYLIHNNVQFATLTYV. Residues 97-100 lie on the Lumenal side of the membrane; it reads DPST. The chain crosses the membrane as a helical span at residues 101–120; that stretch reads YQIMGNLKIVTTGILFRLVL. Residues 121 to 126 lie on the Cytoplasmic side of the membrane; it reads KRKLSN. The helical transmembrane segment at 127-144 threads the bilayer; sequence LQWMAVVLLAVGTTTSQV. Topologically, residues 145–157 are lumenal; that stretch reads KGCGDAPCDSLFS. The chain crosses the membrane as a helical span at residues 158-178; that stretch reads APFQGYMLGILSACLSALAGV. At 179–198 the chain is on the cytoplasmic side; it reads YTEYLMKKNNDSLYWQNVQL. A helical membrane pass occupies residues 199–219; it reads YTFGVIFNMGWLIYGDFKAGF. At 220-233 the chain is on the lumenal side; sequence ERGPWWQRLFNGYS. A helical transmembrane segment spans residues 234 to 254; it reads ITTWMVVFNLGSTGLLVSWLM. The Cytoplasmic portion of the chain corresponds to 255–262; it reads KYSDNIVK. A helical membrane pass occupies residues 263–283; it reads VYSTSMGMLLTMVLSVYLFNV. At 284 to 286 the chain is on the lumenal side; that stretch reads RAT.

This sequence belongs to the nucleotide-sugar transporter family. CMP-Sialate:CMP antiporter (TC 2.A.7.12) subfamily.

Its subcellular location is the golgi apparatus membrane. In terms of biological role, sugar transporter involved in the transport of CMP-sialic acid from the cytoplasm into the Golgi. May transport important nucleotide sugars such as CMP-Kdo (2-keto-3-deoxy-D-manno-octulosonic acid) in physiological conditions. The chain is CMP-sialic acid transporter 1 from Oryza sativa subsp. indica (Rice).